A 302-amino-acid polypeptide reads, in one-letter code: Merozoite surface protein 2 (302 aa).

Positions 1–20 (MKVIKTLSIINFFIFVTFNI) are cleaved as a signal peptide. 2 N-linked (GlcNAc...) asparagine glycosylation sites follow: Asn-22 and Asn-36. The interval 44 to 228 (EESKPPTGAV…EQTESPELQS (185 aa)) is polymorphic region. Residues 55–60 (GSGAGA) form a 1; partial repeat. The tract at residues 55–113 (GSGAGAGSGAGAVAGSGAGAVAGSGAGAVAGSGAGAVAGSGAGAVAGSGAGAVAGSGAG) is 8 X 8 AA tandem repeats of G-S-G-A-G-A-V-A. 6 consecutive repeat copies span residues 61–68 (GSGAGAVA), 69–76 (GSGAGAVA), 77–84 (GSGAGAVA), 85–92 (GSGAGAVA), 93–100 (GSGAGAVA), and 101–108 (GSGAGAVA). Residues 109 to 113 (GSGAG) form an 8; partial repeat. Residues 114–263 (NGANPGADAE…DSQKECTDGN (150 aa)) are disordered. The span at 125–150 (SPSTPATTTTTTTTNDAEASTSTSSE) shows a compositional bias: low complexity. The segment covering 151 to 167 (NRNHNNAETNPKGKGEV) has biased composition (basic and acidic residues). Polar residues-rich tracts occupy residues 169 to 195 (KPNQ…NVPR) and 202 to 230 (KSPT…QSAP). The N-linked (GlcNAc...) asparagine glycan is linked to Asn-179. N-linked (GlcNAc...) asparagine glycosylation occurs at Asn-251. A disulfide bridge connects residues Cys-259 and Cys-267. Residues Asn-275 and Asn-276 are each glycosylated (N-linked (GlcNAc...) asparagine). A lipid anchor (GPI-anchor amidated asparagine) is attached at Asn-276. A propeptide spans 277–302 (SSNIASINKFVVLISATLVLSFAIFI) (removed in mature form).

The protein localises to the cell membrane. In terms of biological role, may play a role in the merozoite attachment to the erythrocyte. The protein is Merozoite surface protein 2 of Plasmodium falciparum (isolate tak 9).